Reading from the N-terminus, the 186-residue chain is uncharacterized protein (186 aa).

Disordered stretches follow at residues 17 to 47, 77 to 105, and 121 to 164; these read LSGESEEDLAEERENPALVGSETAEPTEETF, EDKLLPSEPCADHPLAARPPSQAAAAAEA, and QQAA…PVAG. Positions 90–105 are enriched in low complexity; sequence PLAARPPSQAAAAAEA. Acidic residues predominate over residues 136–149; sequence PEPDPEPADEAAEE.

This is an uncharacterized protein from Homo sapiens (Human).